The chain runs to 102 residues: Small ribosomal subunit protein uS10 (102 aa).

Residues 34–58 are disordered; that stretch reads LSGPVPLPTKTLEIPARKSPDGEGT.

This sequence belongs to the universal ribosomal protein uS10 family. As to quaternary structure, part of the 30S ribosomal subunit.

Functionally, involved in the binding of tRNA to the ribosomes. The chain is Small ribosomal subunit protein uS10 from Natronomonas pharaonis (strain ATCC 35678 / DSM 2160 / CIP 103997 / JCM 8858 / NBRC 14720 / NCIMB 2260 / Gabara) (Halobacterium pharaonis).